The primary structure comprises 1026 residues: Retinoblastoma-related protein 1 (1026 aa).

Positions 416–616 (TPVSTAMTTA…EKGSSMYNSL (201 aa)) are domain A. The segment at 416 to 872 (TPVSTAMTTA…NEVFIPSVKP (457 aa)) is pocket. The segment at 617–737 (AVARPALSVE…PGGGGETCAE (121 aa)) is spacer. The tract at residues 656–680 (PVPSLPKPEPMSAQNGDPRSPKRPC) is disordered. A domain B region spans residues 738–872 (TGISVFFSKI…NEVFIPSVKP (135 aa)). A disordered region spans residues 1007-1026 (QNGSSASSSGAPLKSEQPDS).

The protein belongs to the retinoblastoma protein (RB) family.

Its subcellular location is the nucleus. Functionally, regulator of biological processes that recruits a histone deacetylase to control gene transcription. May play a role in the entry into mitosis, negatively regulating the cell proliferation. Formation of stable complexes with geminiviridae replication-associated proteins may create a cellular environment which favors viral DNA replication. This chain is Retinoblastoma-related protein 1 (RBR1), found in Pisum sativum (Garden pea).